The chain runs to 85 residues: MKTVFAILFLAFIALTYARSYEDVKEEIKNEVEKEILEDLEEESDELNDKRKEINDAKPWRWVRRIRWKKLIPYIPVVVAAAGKK.

The first 18 residues, 1–18, serve as a signal peptide directing secretion; it reads MKTVFAILFLAFIALTYA. Positions 19-57 are excised as a propeptide; it reads RSYEDVKEEIKNEVEKEILEDLEEESDELNDKRKEINDA. At Ala82 the chain carries Alanine amide.

Belongs to the arminin family. In terms of tissue distribution, expressed in entodermal epithelium along the body column.

Its subcellular location is the secreted. The protein localises to the target cell membrane. Its function is as follows. Antimicrobial peptide with a broad-spectrum antimicrobial activity. Keeps its antibacterial activity under a wide range of salt concentrations that mimic physiological conditions of human blood, which is surprising, since Hydra is an obligate freshwater animal with nearly no salt tolerance. Does not affect red blood cells. This Hydra vulgaris (Hydra) protein is Arminin 6494.